We begin with the raw amino-acid sequence, 459 residues long: Bifunctional protein GlmU (459 aa).

Positions 1 to 230 (MSNRFAVILA…FDETLGVNDR (230 aa)) are pyrophosphorylase. UDP-N-acetyl-alpha-D-glucosamine is bound by residues 9–12 (LAAG), Lys-23, Gln-73, and 78–79 (GT). Asp-103 is a Mg(2+) binding site. Positions 140, 155, 170, and 228 each coordinate UDP-N-acetyl-alpha-D-glucosamine. Mg(2+) is bound at residue Asn-228. The segment at 231-251 (VALSQAEIIMKNRINRKNMVN) is linker. An N-acetyltransferase region spans residues 252-459 (GVTIIDPSNT…VDQLLNKKKS (208 aa)). UDP-N-acetyl-alpha-D-glucosamine contacts are provided by Arg-333 and Lys-351. The active-site Proton acceptor is His-363. Residues Tyr-366 and Asn-377 each contribute to the UDP-N-acetyl-alpha-D-glucosamine site. Acetyl-CoA is bound by residues 386-387 (NY), Ala-423, and Arg-440.

This sequence in the N-terminal section; belongs to the N-acetylglucosamine-1-phosphate uridyltransferase family. It in the C-terminal section; belongs to the transferase hexapeptide repeat family. As to quaternary structure, homotrimer. Mg(2+) is required as a cofactor.

It localises to the cytoplasm. The enzyme catalyses alpha-D-glucosamine 1-phosphate + acetyl-CoA = N-acetyl-alpha-D-glucosamine 1-phosphate + CoA + H(+). It carries out the reaction N-acetyl-alpha-D-glucosamine 1-phosphate + UTP + H(+) = UDP-N-acetyl-alpha-D-glucosamine + diphosphate. The protein operates within nucleotide-sugar biosynthesis; UDP-N-acetyl-alpha-D-glucosamine biosynthesis; N-acetyl-alpha-D-glucosamine 1-phosphate from alpha-D-glucosamine 6-phosphate (route II): step 2/2. It participates in nucleotide-sugar biosynthesis; UDP-N-acetyl-alpha-D-glucosamine biosynthesis; UDP-N-acetyl-alpha-D-glucosamine from N-acetyl-alpha-D-glucosamine 1-phosphate: step 1/1. Its pathway is bacterial outer membrane biogenesis; LPS lipid A biosynthesis. Its function is as follows. Catalyzes the last two sequential reactions in the de novo biosynthetic pathway for UDP-N-acetylglucosamine (UDP-GlcNAc). The C-terminal domain catalyzes the transfer of acetyl group from acetyl coenzyme A to glucosamine-1-phosphate (GlcN-1-P) to produce N-acetylglucosamine-1-phosphate (GlcNAc-1-P), which is converted into UDP-GlcNAc by the transfer of uridine 5-monophosphate (from uridine 5-triphosphate), a reaction catalyzed by the N-terminal domain. The polypeptide is Bifunctional protein GlmU (Bacillus cereus (strain AH187)).